We begin with the raw amino-acid sequence, 415 residues long: [Pyruvate dehydrogenase (acetyl-transferring)] kinase isozyme 3, mitochondrial (415 aa).

In terms of domain architecture, Histidine kinase spans 131-362 (IEYKEKFGFD…DAVIYLKALS (232 aa)). Position 247 to 254 (247 to 254 (ELFKNSMR)) interacts with ATP. At Lys-278 the chain carries N6-succinyllysine. ATP is bound by residues Asp-287, 306–307 (ST), and 323–328 (GFGYGL). The tract at residues 383-415 (TPEADDWSNPSSEPRDASKYKAKQDKIKSNRTF) is disordered. Over residues 395 to 415 (EPRDASKYKAKQDKIKSNRTF) the composition is skewed to basic and acidic residues.

Belongs to the PDK/BCKDK protein kinase family. In terms of assembly, homodimer. Interacts with the pyruvate dehydrogenase complex subunit DLAT, and is part of the multimeric pyruvate dehydrogenase complex that contains multiple copies of pyruvate dehydrogenase (E1), dihydrolipoamide acetyltransferase (DLAT, E2) and lipoamide dehydrogenase (DLD, E3).

The protein localises to the mitochondrion matrix. It catalyses the reaction L-seryl-[pyruvate dehydrogenase E1 alpha subunit] + ATP = O-phospho-L-seryl-[pyruvate dehydrogenase E1 alpha subunit] + ADP + H(+). Its function is as follows. Inhibits pyruvate dehydrogenase activity by phosphorylation of the E1 subunit PDHA1, and thereby regulates glucose metabolism and aerobic respiration. Can also phosphorylate PDHA2. Decreases glucose utilization and increases fat metabolism in response to prolonged fasting, and as adaptation to a high-fat diet. Plays a role in glucose homeostasis and in maintaining normal blood glucose levels in function of nutrient levels and under starvation. Plays a role in the generation of reactive oxygen species. This Mus musculus (Mouse) protein is [Pyruvate dehydrogenase (acetyl-transferring)] kinase isozyme 3, mitochondrial (Pdk3).